We begin with the raw amino-acid sequence, 274 residues long: Lipid phosphate phosphatase 1 (274 aa).

Residues methionine 1–lysine 15 are Lumenal-facing. The chain crosses the membrane as a helical span at residues leucine 16–tyrosine 33. Residues serine 34–cysteine 69 lie on the Cytoplasmic side of the membrane. A helical transmembrane segment spans residues leucine 70–phenylalanine 87. Residues aspartate 88–serine 117 lie on the Lumenal side of the membrane. A helical transmembrane segment spans residues isoleucine 118 to isoleucine 139. Positions lysine 136–proline 144 are phosphatase sequence motif I. Residues glycine 140–histidine 189 are Cytoplasmic-facing. Residues proline 186–histidine 189 are phosphatase sequence motif II. A helical transmembrane segment spans residues serine 190–tryptophan 203. Residues glutamine 204 to serine 214 lie on the Lumenal side of the membrane. Residues cysteine 215–isoleucine 231 form a helical membrane-spanning segment. The phosphatase sequence motif III stretch occupies residues serine 228–aspartate 239. The Cytoplasmic segment spans residues aspartate 232–tryptophan 237. The chain crosses the membrane as a helical span at residues tyrosine 238 to tryptophan 255. Residues lysine 256–valine 274 lie on the Lumenal side of the membrane.

The protein belongs to the PA-phosphatase related phosphoesterase family.

It is found in the golgi apparatus membrane. The catalysed reaction is a 1,2-diacyl-sn-glycerol 3-diphosphate + H2O = a 1,2-diacyl-sn-glycero-3-phosphate + phosphate + H(+). It catalyses the reaction a 1,2-diacyl-sn-glycero-3-phosphate + H2O = a 1,2-diacyl-sn-glycerol + phosphate. The enzyme catalyses a 1-acyl-sn-glycero-3-phosphate + H2O = a 1-acyl-sn-glycerol + phosphate. PA phosphatase activity is magnesium ion-independent and potently inhibited by N-ethylmaleimide. Also inhibited by phenylglyoxal and propranolol. Functionally, catalyzes the dephosphorylation of diacylglycerol diphosphate (DGPP) to phosphatidate (PA) and the subsequent dephosphorylation of PA to diacylglycerol (DAG). Together with DPP1, regulates intracellular DGPP and PA levels which are phospholipid molecules believed to play a signaling role in stress response. Can also use lysophosphatidic acid (LPA) as a substrate. Substrate preference is PA &gt; DGPP &gt; LPA. The chain is Lipid phosphate phosphatase 1 (LPP1) from Saccharomyces cerevisiae (strain ATCC 204508 / S288c) (Baker's yeast).